The chain runs to 267 residues: Acetyl-coenzyme A carboxylase carboxyl transferase subunit beta 1 (267 aa).

The 259-residue stretch at 9–267 (TWQACPKCGR…NYGIGRSAHG (259 aa)) folds into the CoA carboxyltransferase N-terminal domain. Residues C13, C16, C31, and C34 each contribute to the Zn(2+) site. A C4-type zinc finger spans residues 13-34 (CPKCGRHVHQRQWGTYQQCPYC).

The protein belongs to the AccD/PCCB family. In terms of assembly, acetyl-CoA carboxylase is a heterohexamer composed of biotin carboxyl carrier protein (AccB), biotin carboxylase (AccC) and two subunits each of ACCase subunit alpha (AccA) and ACCase subunit beta (AccD). Zn(2+) serves as cofactor.

The protein resides in the cytoplasm. It catalyses the reaction N(6)-carboxybiotinyl-L-lysyl-[protein] + acetyl-CoA = N(6)-biotinyl-L-lysyl-[protein] + malonyl-CoA. It participates in lipid metabolism; malonyl-CoA biosynthesis; malonyl-CoA from acetyl-CoA: step 1/1. Its function is as follows. Component of the acetyl coenzyme A carboxylase (ACC) complex. Biotin carboxylase (BC) catalyzes the carboxylation of biotin on its carrier protein (BCCP) and then the CO(2) group is transferred by the transcarboxylase to acetyl-CoA to form malonyl-CoA. In Lactiplantibacillus plantarum (strain JDM1) (Lactobacillus plantarum), this protein is Acetyl-coenzyme A carboxylase carboxyl transferase subunit beta 1.